The following is a 1032-amino-acid chain: Vacuolar membrane protease (1032 aa).

Residues 1 to 11 (MKLGNPFVFRP) are Cytoplasmic-facing. A helical transmembrane segment spans residues 12 to 32 (GPVSFWTTIVYLAIIIPLIYV). Residues 33 to 415 (QETVPPAPSE…SAFALRGLFA (383 aa)) are Vacuolar-facing. Residues asparagine 50, asparagine 138, and asparagine 147 are each glycosylated (N-linked (GlcNAc...) asparagine). Zn(2+) is bound by residues histidine 194 and aspartate 206. Glutamate 240 (proton acceptor) is an active-site residue. Zn(2+) is bound by residues glutamate 241, glutamate 266, and histidine 339. The chain crosses the membrane as a helical span at residues 416–436 (WTLTLLITTPLVLFVVTYLLV). Over 437–469 (RDDKWYFFATKVDSTVGDGEETVSFGGWKGFVR) the chain is Cytoplasmic. Residues 470–490 (FPFALVVATALTIGSVFLLAK) form a helical membrane-spanning segment. Residues 491 to 493 (VNP) are Vacuolar-facing. Residues 494–514 (LIIYSSGYSVWAMMISLFYFV) form a helical membrane-spanning segment. The Cytoplasmic segment spans residues 515-532 (SWLLLRGAHFVRPSALQR). A helical transmembrane segment spans residues 533 to 553 (GFTLIWLFIITWVLSVFAAVA). Residues 554–560 (EDRMNMG) lie on the Vacuolar side of the membrane. The chain crosses the membrane as a helical span at residues 561 to 581 (AVYPLAFLHTFAFAAVLISLL). Over 582-701 (EQYALPAKQD…WSGRLPTWTW (120 aa)) the chain is Cytoplasmic. The segment at 595-688 (QVSGENEEEE…RKRSFPPYEN (94 aa)) is disordered. The span at 599-608 (ENEEEEEQEQ) shows a compositional bias: acidic residues. Polar residues predominate over residues 651–660 (SSEQTTTFAN). Residues 702-722 (FIQLLLLVPLYVTVLGNLALV) form a helical membrane-spanning segment. The Vacuolar segment spans residues 723-738 (QTTSIGKTGTDGSSLL). A helical membrane pass occupies residues 739–759 (APLMGVGILAILLLLPLTPFI). Over 760–766 (HRVSHHV) the chain is Cytoplasmic. The chain crosses the membrane as a helical span at residues 767–787 (PLFLFLVFIGTLIYNLTAFPF). Over 788-1032 (SDNNRFKFYF…VEITKKIKVA (245 aa)) the chain is Vacuolar. The N-linked (GlcNAc...) asparagine glycan is linked to asparagine 940.

Belongs to the peptidase M28 family. Zn(2+) serves as cofactor.

Its subcellular location is the vacuole membrane. May be involved in vacuolar sorting and osmoregulation. This is Vacuolar membrane protease from Metarhizium robertsii (strain ARSEF 23 / ATCC MYA-3075) (Metarhizium anisopliae (strain ARSEF 23)).